We begin with the raw amino-acid sequence, 361 residues long: DNA replication and repair protein RecF (361 aa).

30-37 (GPNGSGKT) contacts ATP.

Belongs to the RecF family.

The protein resides in the cytoplasm. Its function is as follows. The RecF protein is involved in DNA metabolism; it is required for DNA replication and normal SOS inducibility. RecF binds preferentially to single-stranded, linear DNA. It also seems to bind ATP. This is DNA replication and repair protein RecF from Yersinia pestis.